Reading from the N-terminus, the 77-residue chain is U8-lycotoxin-Ls1i (77 aa).

The signal sequence occupies residues 1–20 (MKLIIFTGLVLFAIVSLIEV). The propeptide occupies 21 to 26 (QADNER).

The protein belongs to the neurotoxin 19 (CSTX) family. 08 (U8-Lctx) subfamily. Contains 4 disulfide bonds. In terms of tissue distribution, expressed by the venom gland.

It is found in the secreted. In Lycosa singoriensis (Wolf spider), this protein is U8-lycotoxin-Ls1i.